Here is a 105-residue protein sequence, read N- to C-terminus: Thiosulfate sulfurtransferase GlpE (105 aa).

The Rhodanese domain occupies 16–104; that stretch reads DKEDVVIADI…WEAAYSEKVE (89 aa). C64 serves as the catalytic Cysteine persulfide intermediate.

This sequence belongs to the GlpE family.

The protein resides in the cytoplasm. It catalyses the reaction thiosulfate + hydrogen cyanide = thiocyanate + sulfite + 2 H(+). It carries out the reaction thiosulfate + [thioredoxin]-dithiol = [thioredoxin]-disulfide + hydrogen sulfide + sulfite + 2 H(+). Its function is as follows. Transferase that catalyzes the transfer of sulfur from thiosulfate to thiophilic acceptors such as cyanide or dithiols. May function in a CysM-independent thiosulfate assimilation pathway by catalyzing the conversion of thiosulfate to sulfite, which can then be used for L-cysteine biosynthesis. The polypeptide is Thiosulfate sulfurtransferase GlpE (Pseudoalteromonas translucida (strain TAC 125)).